The chain runs to 606 residues: Medium-chain acyl-CoA ligase ACSF2, mitochondrial (606 aa).

The transit peptide at 1–13 (MSSKILLTNLRTS) directs the protein to the mitochondrion. ATP contacts are provided by residues 256 to 264 (TSGTTGKPK), D484, R499, and K590.

Belongs to the ATP-dependent AMP-binding enzyme family.

The protein localises to the mitochondrion. The enzyme catalyses a medium-chain fatty acid + ATP + CoA = a medium-chain fatty acyl-CoA + AMP + diphosphate. It catalyses the reaction octanoate + ATP + CoA = octanoyl-CoA + AMP + diphosphate. Functionally, acyl-CoA synthases catalyze the initial reaction in fatty acid metabolism, by forming a thioester with CoA. Has some preference toward medium-chain substrates. Plays a role in adipocyte differentiation. This is Medium-chain acyl-CoA ligase ACSF2, mitochondrial from Danio rerio (Zebrafish).